A 371-amino-acid chain; its full sequence is METIIESRQRINSPGVLPPPLSPLIVDVTPKERASISNVANILLKAFGHYEHPDFISALHLNAFQLLPERIAGILSRFGTDFSRHQYGALVFRGLTEVDQEALGPTPPSWKETDYSKLVKYGFICSLLHGAIPSKPVQYYAQRKGGGLLHAVIPDEKMSHTQTGSGSRTDLFVHTEDAFLFNQADFLSFLFLRNEEQVPSTLYSIRSHGDTNAIMAELFKPIYKCPKDANYADDENAGEEVTTSILYGNRERPFIRFDAAEQIYNEKAGQTPEAMHNLVRFWDEAKQLIYNDFVPDSGDLIFVNNHLCAHGRNSFVAGYRNENGQLVKCERRLMLRMMSKTSLINIQSVTQLNDPYFIMEEHYGKLFHSQQ.

Fe cation-binding residues include His-174, Glu-176, and His-310.

Belongs to the clavaminate synthase family. It depends on Fe(2+) as a cofactor.

It catalyses the reaction L-lysine + 2-oxoglutarate + O2 = (4R)-4-hydroxy-L-lysine + succinate + CO2. Its function is as follows. Alpha-ketoglutarate-dependent dioxygenase that in vitro catalyzes the regio- and stereoselective hydroxylation of L-lysine, leading to (4R)-4-hydroxy-L-lysine. This Niastella koreensis (strain DSM 17620 / KACC 11465 / NBRC 106392 / GR20-10) protein is L-lysine 4-hydroxylase.